The following is a 353-amino-acid chain: S-adenosylmethionine:tRNA ribosyltransferase-isomerase (353 aa).

Belongs to the QueA family. Monomer.

Its subcellular location is the cytoplasm. It carries out the reaction 7-aminomethyl-7-carbaguanosine(34) in tRNA + S-adenosyl-L-methionine = epoxyqueuosine(34) in tRNA + adenine + L-methionine + 2 H(+). Its pathway is tRNA modification; tRNA-queuosine biosynthesis. Transfers and isomerizes the ribose moiety from AdoMet to the 7-aminomethyl group of 7-deazaguanine (preQ1-tRNA) to give epoxyqueuosine (oQ-tRNA). The chain is S-adenosylmethionine:tRNA ribosyltransferase-isomerase from Dinoroseobacter shibae (strain DSM 16493 / NCIMB 14021 / DFL 12).